We begin with the raw amino-acid sequence, 217 residues long: Ufm1-specific protease 1 (217 aa).

Active-site residues include Cys-53, Asp-175, and His-177.

This sequence belongs to the peptidase C78 family. As to expression, widely expressed. Expressed at higher level in brain, heart, kidney and skeletal muscle.

The protein resides in the cytoplasm. Its subcellular location is the cytosol. In terms of biological role, thiol-dependent isopeptidase that specifically mediate the processing of UFM1 precursors as well as the deconjugation of UFM1 from target proteins. Mainly responsible for the maturation of the UFM1 precursor, a prerequisite for conjugation reactions. This Mus musculus (Mouse) protein is Ufm1-specific protease 1.